The sequence spans 288 residues: Energy-coupling factor transporter ATP-binding protein EcfA3 (288 aa).

Residues 3–245 form the ABC transporter domain; that stretch reads INFRNVSFSY…ESYLRKEKLR (243 aa). ATP is bound at residue 40-47; sequence GHTGSGKS.

This sequence belongs to the ABC transporter superfamily. Energy-coupling factor EcfA family. Forms a stable energy-coupling factor (ECF) transporter complex composed of 2 membrane-embedded substrate-binding proteins (S component), 2 ATP-binding proteins (A component) and 2 transmembrane proteins (T component).

It localises to the cell membrane. ATP-binding (A) component of a common energy-coupling factor (ECF) ABC-transporter complex. Unlike classic ABC transporters this ECF transporter provides the energy necessary to transport a number of different substrates. The chain is Energy-coupling factor transporter ATP-binding protein EcfA3 from Oenococcus oeni (strain ATCC BAA-331 / PSU-1).